The following is a 153-amino-acid chain: Nucleoside diphosphate kinase (153 aa).

Residues lysine 11, phenylalanine 59, arginine 87, threonine 93, arginine 104, and asparagine 114 each coordinate ATP. Histidine 117 (pros-phosphohistidine intermediate) is an active-site residue.

Belongs to the NDK family. Homotrimer. Mg(2+) serves as cofactor.

It carries out the reaction a 2'-deoxyribonucleoside 5'-diphosphate + ATP = a 2'-deoxyribonucleoside 5'-triphosphate + ADP. The catalysed reaction is a ribonucleoside 5'-diphosphate + ATP = a ribonucleoside 5'-triphosphate + ADP. In terms of biological role, major role in the synthesis of nucleoside triphosphates other than ATP. The ATP gamma phosphate is transferred to the NDP beta phosphate via a ping-pong mechanism, using a phosphorylated active-site intermediate. The polypeptide is Nucleoside diphosphate kinase (ndk1) (Aspergillus fumigatus (strain ATCC MYA-4609 / CBS 101355 / FGSC A1100 / Af293) (Neosartorya fumigata)).